A 207-amino-acid polypeptide reads, in one-letter code: Outer-membrane lipoprotein carrier protein (207 aa).

The first 21 residues, 1–21 (MRLFRVLLLSAVAFALSPAQA), serve as a signal peptide directing secretion.

Belongs to the LolA family. In terms of assembly, monomer.

The protein resides in the periplasm. Participates in the translocation of lipoproteins from the inner membrane to the outer membrane. Only forms a complex with a lipoprotein if the residue after the N-terminal Cys is not an aspartate (The Asp acts as a targeting signal to indicate that the lipoprotein should stay in the inner membrane). The polypeptide is Outer-membrane lipoprotein carrier protein (Azotobacter vinelandii (strain DJ / ATCC BAA-1303)).